We begin with the raw amino-acid sequence, 231 residues long: Ribose-5-phosphate isomerase A (231 aa).

Substrate-binding positions include 32-35, 85-88, and 98-101; these read TGST, DGAD, and KGGG. The active-site Proton acceptor is the E107. Position 125 (K125) interacts with substrate.

The protein belongs to the ribose 5-phosphate isomerase family. As to quaternary structure, homodimer.

The enzyme catalyses aldehydo-D-ribose 5-phosphate = D-ribulose 5-phosphate. It functions in the pathway carbohydrate degradation; pentose phosphate pathway; D-ribose 5-phosphate from D-ribulose 5-phosphate (non-oxidative stage): step 1/1. Its function is as follows. Catalyzes the reversible conversion of ribose-5-phosphate to ribulose 5-phosphate. The sequence is that of Ribose-5-phosphate isomerase A from Burkholderia mallei (strain NCTC 10247).